The chain runs to 3390 residues: MNNQRKKTGKPSINMLKRVRNRVSTGSQLAKRFSRGLLNGQGPMKLVMAFIAFLRFLAIPPTAGVLARWGTFKKSGAIKVLKGFKKEISNMLSIINKRKKTSLCLMMMLPATLAFHLTSRDGEPRMIVGKNERGKSLLFKTASGINMCTLIAMDLGEMCDDTVTYKCPHITEVEPEDIDCWCNLTSTWVTYGTCNQAGEHRRDKRSVALAPHVGMGLDTRTQTWMSAEGAWRQVEKVETWALRHPGFTILALFLAHYIGTSLTQKVVIFILLMLVTPSMTMRCVGVGNRDFVEGLSGATWVDVVLEHGGCVTTMAKNKPTLDIELQKTEATQLATLRKLCIEGKITNITTDSRCPTQGEAILPEEQDQNYVCKHTYVDRGWGNGCGLFGKGSLVTCAKFQCLESIEGKVVQHENLKYTVIITVHTGDQHQVGNETQGVTAEITSQASTAEAILPEYGTLGLECSPRTGLDFNEMILLTMKNKAWMVHRQWFFDLPLPWTSGATTKTPTWNRKELLVTFKNAHAKKQEVVVLGSQEGAMHTALTGATEIQTSGGTSIFAGHLKCRLKMDKLKLKGMSYAMCLNTFVLKKEVSETQHGTILIKVEYKGEDAPCKIPFSTEDGQGKAHNGRLITANPVVTKKEEPVNIEAEPPFGESNIVIGIGDKALKINWYRKGSSIGKMFEATARGARRMAILGDTAWDFGSVGGVLNSLGKMVHQIFGSAYTALFSGVSWIMKIGIGVLLTWIGLNSKNTSMSFSCIAIGIITLYLGVVVQADMGCVINWKGKELKCGSGIFVTNEVHTWTEQYKFQADSPKRVATAIAGAWENGVCGIRSTTRMENLLWKQIANELNYILWENDIKLTVVVGDITGVLEQGKRTLTPQPMELKYSWKTWGLAKIVTAETQNSSFIIDGPSTPECPSASRAWNVWEVEDYGFGVFTTNIWLKLREVYTQLCDHRLMSAAVKDERAVHADMGYWIESQKNGSWKLEKASLIEVKTCTWPKSHTLWSNGVLESDMIIPKSLAGPISQHNHRPGYHTQTAGPWHLGKLELDFNYCEGTTVVISENCGTRGPSLRTTTVSGKLIHEWCCRSCTLPPLRYMGEDGCWYGMEIRPINEKEENMVKSLASAGSGKVDNFTMGVLCLAILFEEVMRGKFGKKHMIAGVLFTFVLLLSGQITWRGMAHTLIMIGSNASDRMGMGVTYLALIATFKIQPFLALGFFLRKLTSRENLLLGVGLAMAATLRLPEDIEQMANGIALGLMALKLITQFETYQLWTALVSLTCSNTIFTLTVAWRTATLILAGISLLPVCQSSSMRKTDWLPMTVAAMGVPPLPLFIFSLKDTLKRRSWPLNEGVMAVGLVSILASSLLRNDVPMAGPLVAGGLLIACYVITGTSADLTVEKAADVTWEEEAEQTGVSHNLMITVDDDGTMRIKDDETENILTVLLKTALLIVSGIFPYSIPATMLVWHTWQKQTQRSGVLWDVPSPPETQKAELEEGVYRIKQQGIFGKTQVGVGVQKEGVFHTMWHVTRGAVLTHNGKRLEPNWASVKKDLISYGGGWRLSAQWQKGEEVQVIAVEPGKNPKNFQTMPGIFQTTTGEIGAIALDFKPGTSGSPIINREGKVVGLYGNGVVTKNGGYVSGIAQTNAEPDGPTPELEEEMFKKRNLTIMDLHPGSGKTRKYLPAIVREAIKRRLRTLILAPTRVVAAEMEEAMKGLPIRYQTTATKSEHTGREIVDLMCHATFTMRLLSPVRVPNYNLIIMDEAHFTDPASIAARGYISTRVGMGEAAAIFMTATPPGTADAFPQSNAPIQDEERDIPERSWNSGNEWITDFVGKTVWFVPSIKAGNVIANCLRKNGKKVIQLSRKTFDTEYQKTKLNDWDFVVTTDISEMGANFIADRVIDPRRCLKPVILTDGPERVILAGPMPVTVASAAQRRGRVGRNPQKENDQYIFMGQPLNKDEDHAHWTEAKMLLDNINTPEGIIPALFEPEREKSAAIDGEYRLKGESRKTFVELMRRGDLPVWLAHKVASEGIKYTDRKWCFDGERNNQILEENMDVEIWTKEGEKKKLRPRWLDARTYSDPLALKEFKDFAAGRKSIALDLVTEIGRVPSHLAHRTRNALDNLVMLHTSEHGGRAYRHAVEELPETMETLLLLGLMILLTGGAMLFLISGKGIGKTSIGLICVIASSGMLWMADVPLQWIASAIVLEFFMMVLLIPEPEKQRTPQDNQLAYVVIGILTLAAIVAANEMGLLETTKRDLGMSKEPGVVSPTSYLDVDLHPASAWTLYAVATTVITPMLRHTIENSTANVSLAAIANQAVVLMGLDKGWPISKMDLGVPLLALGCYSQVNPLTLIAAVLLLVTHYAIIGPGLQAKATREAQKRTAAGIMKNPTVDGIMTIDLDPVIYDSKFEKQLGQVMLLVLCAVQLLLMRTSWALCEVLTLATGPITTLWEGSPGKFWNTTIAVSMANIFRGSYLAGAGLALSIMKSVGTGKRGTGSQGETLGEKWKKKLNQLSRKEFDLYKKSGITEVDRTEAKEGLKRGEITHHAVSRGSAKLQWFVERNMVIPEGRVIDLGCGRGGWSYYCAGLKKVTEVRGYTKGGPGHEEPVPMSTYGWNIVKLMSGKDVFYLPPEKCDTLLCDIGESSPSPTVEESRTIRVLKMVEPWLKNNQFCIKVLNPYMPTVIEHLERLQRKHGGMLVRNPLSRNSTHEMYWISNGTGNIVSSVNMVSRLLLNRFTMTHRRPTIEKDVDLGAGTRHVNAEPETPNMDVIGERIKRIKEEHSSTWHYDDENPYKTWAYHGSYEVKATGSASSMINGVVKLLTKPWDVVPMVTQMAMTDTTPFGQQRVFKEKVDTRTPRPMPGTRKVMEITAEWLWRTLGRNKRPRLCTREEFTKKVRTNAAMGAVFTEENQWDSARAAVEDEEFWKLVDRERELHKLGKCGSCVYNMMGKREKKLGEFGKAKGSRAIWYMWLGARYLEFEALGFLNEDHWFSRENSYSGVEGEGLHKLGYILRDISKIPGGAMYADDTAGWDTRITEDDLHNEEKITQQMDPEHRQLANAIFKLTYQNKVVKVQRPTPKGTVMDIISRKDQRGSGQVGTYGLNTFTNMEAQLIRQMEGEGVLSKADLENPHPLEKKITQWLETKGVERLKRMAISGDDCVVKPIDDRFANALLALNDMGKVRKDIPQWQPSKGWHDWQQVPFCSHHFHELIMKDGRKLVVPCRPQDELIGRARISQGAGWSLRETACLGKAYAQMWTLMYFHRRDLRLASNAICSAVPVHWVPTSRTTWSIHAHHQWMTTEDMLTVWNRVWIEDNPWMEDKTPVTTWEDVPYLGKREDQWCGSLIGLTSRATWAQNILTAIQQVRSLIGNEEFLDYMPSMKRFRKEEESEGAIW.

An interaction with host EXOC1 region spans residues 1 to 15; it reads MNNQRKKTGKPSINM. Over 1 to 100 the chain is Cytoplasmic; that stretch reads MNNQRKKTGK…MLSIINKRKK (100 aa). The segment at 37–72 is hydrophobic; homodimerization of capsid protein C; sequence LLNGQGPMKLVMAFIAFLRFLAIPPTAGVLARWGTF. A propeptide spans 101–114 (ER anchor for the capsid protein C, removed in mature form by serine protease NS3); the sequence is TSLCLMMMLPATLA. The chain crosses the membrane as a helical span at residues 101–118; that stretch reads TSLCLMMMLPATLAFHLT. The Extracellular segment spans residues 119–243; the sequence is SRDGEPRMIV…VEKVETWALR (125 aa). Asn183 carries an N-linked (GlcNAc...) asparagine; by host glycan. The chain crosses the membrane as a helical span at residues 244–264; that stretch reads HPGFTILALFLAHYIGTSLTQ. Position 265 (Lys265) is a topological domain, cytoplasmic. A helical transmembrane segment spans residues 266–280; the sequence is VVIFILLMLVTPSMT. At 281–723 the chain is on the extracellular side; sequence MRCVGVGNRD…VHQIFGSAYT (443 aa). 4 disulfide bridges follow: Cys283-Cys310, Cys340-Cys401, Cys354-Cys385, and Cys372-Cys396. An N-linked (GlcNAc...) asparagine; by host glycan is attached at Asn347. The tract at residues 378 to 391 is fusion peptide; that stretch reads DRGWGNGCGLFGKG. N-linked (GlcNAc...) asparagine; by host glycosylation is present at Asn433. Cystine bridges form between Cys463–Cys563 and Cys580–Cys611. Residues 724–744 form a helical membrane-spanning segment; it reads ALFSGVSWIMKIGIGVLLTWI. Over 745–750 the chain is Cytoplasmic; it reads GLNSKN. A helical transmembrane segment spans residues 751–771; the sequence is TSMSFSCIAIGIITLYLGVVV. Over 772–1193 the chain is Extracellular; the sequence is QADMGCVINW…MIGSNASDRM (422 aa). Cystine bridges form between Cys777/Cys788, Cys828/Cys916, Cys952/Cys996, Cys1053/Cys1102, Cys1064/Cys1086, and Cys1085/Cys1089. Residues Asn903 and Asn980 are each glycosylated (N-linked (GlcNAc...) asparagine; by host). N-linked (GlcNAc...) asparagine; by host glycans are attached at residues Asn1132 and Asn1188. The helical transmembrane segment at 1194–1218 threads the bilayer; sequence GMGVTYLALIATFKIQPFLALGFFL. Residues 1219 to 1224 lie on the Cytoplasmic side of the membrane; sequence RKLTSR. Residues 1225 to 1243 traverse the membrane as a helical segment; it reads ENLLLGVGLAMAATLRLPE. At 1244–1267 the chain is on the lumenal side; sequence DIEQMANGIALGLMALKLITQFET. Residues 1268-1288 form a helical membrane-spanning segment; sequence YQLWTALVSLTCSNTIFTLTV. Ala1289 is a topological domain (cytoplasmic). Residues 1290–1308 form a helical membrane-spanning segment; sequence WRTATLILAGISLLPVCQS. Over 1309 to 1315 the chain is Lumenal; the sequence is SSMRKTD. Residues 1316–1336 traverse the membrane as a helical segment; sequence WLPMTVAAMGVPPLPLFIFSL. The Cytoplasmic segment spans residues 1337 to 1344; it reads KDTLKRRS. A helical membrane pass occupies residues 1345–1365; sequence WPLNEGVMAVGLVSILASSLL. Topologically, residues 1366–1368 are lumenal; sequence RND. A helical membrane pass occupies residues 1369-1389; sequence VPMAGPLVAGGLLIACYVITG. At 1390–1443 the chain is on the cytoplasmic side; sequence TSADLTVEKAADVTWEEEAEQTGVSHNLMITVDDDGTMRIKDDETENILTVLLK. Residues 1396–1435 form an interacts with and activates NS3 protease region; that stretch reads VEKAADVTWEEEAEQTGVSHNLMITVDDDGTMRIKDDETE. An intramembrane region (helical) is located at residues 1444 to 1464; it reads TALLIVSGIFPYSIPATMLVW. Topologically, residues 1465 to 2146 are cytoplasmic; it reads HTWQKQTQRS…VEELPETMET (682 aa). In terms of domain architecture, Peptidase S7 spans 1474–1651; it reads SGVLWDVPSP…NAEPDGPTPE (178 aa). Active-site charge relay system; for serine protease NS3 activity residues include His1524, Asp1548, and Ser1608. A Helicase ATP-binding domain is found at 1654–1810; the sequence is EEMFKKRNLT…QSNAPIQDEE (157 aa). Positions 1658–1661 are important for RNA-binding; that stretch reads KKRN. Residue 1667–1674 coordinates ATP; sequence LHPGSGKT. Residues 1758–1761 carry the DEAH box motif; it reads DEAH. In terms of domain architecture, Helicase C-terminal spans 1821–1986; it reads GNEWITDFVG…GIIPALFEPE (166 aa). An N6-acetyllysine; by host modification is found at Lys1862. Residues 2147 to 2167 traverse the membrane as a helical segment; sequence LLLLGLMILLTGGAMLFLISG. Over 2168 to 2169 the chain is Lumenal; it reads KG. Residues 2170-2190 constitute an intramembrane region (helical); the sequence is IGKTSIGLICVIASSGMLWMA. A topological domain (lumenal) is located at residue Asp2191. The chain crosses the membrane as a helical span at residues 2192–2212; sequence VPLQWIASAIVLEFFMMVLLI. At 2213–2227 the chain is on the cytoplasmic side; that stretch reads PEPEKQRTPQDNQLA. The helical transmembrane segment at 2228 to 2248 threads the bilayer; sequence YVVIGILTLAAIVAANEMGLL. At 2249 to 2273 the chain is on the lumenal side; the sequence is ETTKRDLGMSKEPGVVSPTSYLDVD. The helical intramembrane region spans 2274 to 2294; the sequence is LHPASAWTLYAVATTVITPML. Residues 2295–2305 are Lumenal-facing; that stretch reads RHTIENSTANV. Asn2300 and Asn2304 each carry an N-linked (GlcNAc...) asparagine; by host glycan. An intramembrane region (helical) is located at residues 2306 to 2326; it reads SLAAIANQAVVLMGLDKGWPI. Topologically, residues 2327 to 2346 are lumenal; it reads SKMDLGVPLLALGCYSQVNP. The helical transmembrane segment at 2347 to 2367 threads the bilayer; that stretch reads LTLIAAVLLLVTHYAIIGPGL. Residues 2368–2412 are Cytoplasmic-facing; sequence QAKATREAQKRTAAGIMKNPTVDGIMTIDLDPVIYDSKFEKQLGQ. The chain crosses the membrane as a helical span at residues 2413-2433; that stretch reads VMLLVLCAVQLLLMRTSWALC. Residues 2434 to 2458 lie on the Lumenal side of the membrane; the sequence is EVLTLATGPITTLWEGSPGKFWNTT. Asn2456 is a glycosylation site (N-linked (GlcNAc...) asparagine; by host). A helical transmembrane segment spans residues 2459-2479; that stretch reads IAVSMANIFRGSYLAGAGLAL. Topologically, residues 2480–3390 are cytoplasmic; sequence SIMKSVGTGK…KEEESEGAIW (911 aa). The mRNA cap 0-1 NS5-type MT domain occupies 2492–2753; sequence TGSQGETLGE…DVDLGAGTRH (262 aa). Ser2546 is an S-adenosyl-L-methionine binding site. At Ser2546 the chain carries Phosphoserine. The For 2'-O-MTase activity role is filled by Lys2551. The SUMO-interacting motif signature appears at 2567-2570; that stretch reads VIDL. 6 residues coordinate S-adenosyl-L-methionine: Gly2576, Trp2577, Thr2594, Lys2595, Asp2621, and Val2622. Residue Asp2636 is the For 2'-O-MTase activity of the active site. Ile2637 is a binding site for S-adenosyl-L-methionine. Active-site for 2'-O-MTase activity residues include Lys2670 and Glu2706. Residue Tyr2708 coordinates S-adenosyl-L-methionine. The Zn(2+) site is built by Glu2927, His2931, Cys2936, and Cys2939. Residues 3018 to 3168 enclose the RdRp catalytic domain; sequence AMYADDTAGW…PIDDRFANAL (151 aa). Zn(2+) is bound by residues His3202, Cys3218, and Cys3337.

This sequence in the N-terminal section; belongs to the class I-like SAM-binding methyltransferase superfamily. mRNA cap 0-1 NS5-type methyltransferase family. Homodimer. Interacts (via N-terminus) with host EXOC1 (via C-terminus); this interaction results in EXOC1 degradation through the proteasome degradation pathway. As to quaternary structure, forms heterodimers with envelope protein E in the endoplasmic reticulum and Golgi. In terms of assembly, homodimer; in the endoplasmic reticulum and Golgi. Interacts with protein prM. Interacts with non-structural protein 1. Homodimer; Homohexamer when secreted. Interacts with envelope protein E. As to quaternary structure, interacts (via N-terminus) with serine protease NS3. In terms of assembly, forms a heterodimer with serine protease NS3. May form homooligomers. Forms a heterodimer with NS2B. Interacts with NS4B. Interacts with unphosphorylated RNA-directed RNA polymerase NS5; this interaction stimulates RNA-directed RNA polymerase NS5 guanylyltransferase activity. Interacts with host SHFL. As to quaternary structure, interacts with host MAVS; this interaction inhibits the synthesis of IFN-beta. Interacts with host SHFL. Interacts with host AUP1; the interaction occurs in the presence of Dengue virus NS4B and induces lipophagy which facilitates production of virus progeny particles. In terms of assembly, interacts with serine protease NS3. Homodimer. Interacts with host STAT2; this interaction inhibits the phosphorylation of the latter, and, when all viral proteins are present (polyprotein), targets STAT2 for degradation. Interacts with serine protease NS3. Post-translationally, specific enzymatic cleavages in vivo yield mature proteins. Cleavages in the lumen of endoplasmic reticulum are performed by host signal peptidase, whereas cleavages in the cytoplasmic side are performed by serine protease NS3. Signal cleavage at the 2K-4B site requires a prior NS3 protease-mediated cleavage at the 4A-2K site. In terms of processing, cleaved in post-Golgi vesicles by a host furin, releasing the mature small envelope protein M, and peptide pr. This cleavage is incomplete as up to 30% of viral particles still carry uncleaved prM. N-glycosylated. Post-translationally, N-glycosylated. The excreted form is glycosylated and this is required for efficient secretion of the protein from infected cells. In terms of processing, acetylated by host KAT5. Acetylation modulates NS3 RNA-binding and unwinding activities and plays an important positive role for viral replication. Sumoylation of RNA-directed RNA polymerase NS5 increases NS5 protein stability allowing proper viral RNA replication. Post-translationally, phosphorylated on serines residues. This phosphorylation may trigger NS5 nuclear localization.

The protein localises to the virion. The protein resides in the host nucleus. Its subcellular location is the host cytoplasm. It localises to the host perinuclear region. It is found in the secreted. The protein localises to the virion membrane. The protein resides in the host endoplasmic reticulum membrane. Its subcellular location is the host mitochondrion. It catalyses the reaction Selective hydrolysis of -Xaa-Xaa-|-Yaa- bonds in which each of the Xaa can be either Arg or Lys and Yaa can be either Ser or Ala.. It carries out the reaction RNA(n) + a ribonucleoside 5'-triphosphate = RNA(n+1) + diphosphate. The enzyme catalyses a ribonucleoside 5'-triphosphate + H2O = a ribonucleoside 5'-diphosphate + phosphate + H(+). The catalysed reaction is ATP + H2O = ADP + phosphate + H(+). It catalyses the reaction a 5'-end (5'-triphosphoguanosine)-ribonucleoside in mRNA + S-adenosyl-L-methionine = a 5'-end (N(7)-methyl 5'-triphosphoguanosine)-ribonucleoside in mRNA + S-adenosyl-L-homocysteine. It carries out the reaction a 5'-end (N(7)-methyl 5'-triphosphoguanosine)-ribonucleoside in mRNA + S-adenosyl-L-methionine = a 5'-end (N(7)-methyl 5'-triphosphoguanosine)-(2'-O-methyl-ribonucleoside) in mRNA + S-adenosyl-L-homocysteine + H(+). Its function is as follows. Plays a role in virus budding by binding to the cell membrane and gathering the viral RNA into a nucleocapsid that forms the core of a mature virus particle. During virus entry, may induce genome penetration into the host cytoplasm after hemifusion induced by the surface proteins. Can migrate to the cell nucleus where it modulates host functions. Overcomes the anti-viral effects of host EXOC1 by sequestering and degrading the latter through the proteasome degradation pathway. In terms of biological role, inhibits RNA silencing by interfering with host Dicer. Prevents premature fusion activity of envelope proteins in trans-Golgi by binding to envelope protein E at pH6.0. After virion release in extracellular space, gets dissociated from E dimers. Functionally, acts as a chaperone for envelope protein E during intracellular virion assembly by masking and inactivating envelope protein E fusion peptide. prM is the only viral peptide matured by host furin in the trans-Golgi network probably to avoid catastrophic activation of the viral fusion activity in acidic Golgi compartment prior to virion release. prM-E cleavage is inefficient, and many virions are only partially matured. These uncleaved prM would play a role in immune evasion. Its function is as follows. May play a role in virus budding. Exerts cytotoxic effects by activating a mitochondrial apoptotic pathway through M ectodomain. May display a viroporin activity. In terms of biological role, binds to host cell surface receptor and mediates fusion between viral and cellular membranes. Envelope protein is synthesized in the endoplasmic reticulum in the form of heterodimer with protein prM. They play a role in virion budding in the ER, and the newly formed immature particle is covered with 60 spikes composed of heterodimer between precursor prM and envelope protein E. The virion is transported to the Golgi apparatus where the low pH causes dissociation of PrM-E heterodimers and formation of E homodimers. prM-E cleavage is inefficient, and many virions are only partially matured. These uncleaved prM would play a role in immune evasion. Involved in immune evasion, pathogenesis and viral replication. Once cleaved off the polyprotein, is targeted to three destinations: the viral replication cycle, the plasma membrane and the extracellular compartment. Essential for viral replication. Required for formation of the replication complex and recruitment of other non-structural proteins to the ER-derived membrane structures. Excreted as a hexameric lipoparticle that plays a role against host immune response. Antagonizing the complement function. Binds to the host macrophages and dendritic cells. Inhibits signal transduction originating from Toll-like receptor 3 (TLR3). Functionally, disrupts the host endothelial glycocalyx layer of host pulmonary microvascular endothelial cells, inducing degradation of sialic acid and shedding of heparan sulfate proteoglycans. NS1 induces expression of sialidases, heparanase, and activates cathepsin L, which activates heparanase via enzymatic cleavage. These effects are probably linked to the endothelial hyperpermeability observed in severe dengue disease. Its function is as follows. Component of the viral RNA replication complex that functions in virion assembly and antagonizes the host immune response. In terms of biological role, required cofactor for the serine protease function of NS3. May have membrane-destabilizing activity and form viroporins. Displays three enzymatic activities: serine protease, NTPase and RNA helicase. NS3 serine protease, in association with NS2B, performs its autocleavage and cleaves the polyprotein at dibasic sites in the cytoplasm: C-prM, NS2A-NS2B, NS2B-NS3, NS3-NS4A, NS4A-2K and NS4B-NS5. NS3 RNA helicase binds RNA and unwinds dsRNA in the 3' to 5' direction. Functionally, regulates the ATPase activity of the NS3 helicase activity. NS4A allows NS3 helicase to conserve energy during unwinding. Plays a role in the inhibition of the host innate immune response. Interacts with host MAVS and thereby prevents the interaction between RIGI and MAVS. In turn, IFN-beta production is impaired. Interacts with host AUP1 which mediates induction of lipophagy in host cells and facilitates production of virus progeny particles. Its function is as follows. Functions as a signal peptide for NS4B and is required for the interferon antagonism activity of the latter. In terms of biological role, induces the formation of ER-derived membrane vesicles where the viral replication takes place. Inhibits interferon (IFN)-induced host STAT1 phosphorylation and nuclear translocation, thereby preventing the establishment of cellular antiviral state by blocking the IFN-alpha/beta pathway. Replicates the viral (+) and (-) RNA genome, and performs the capping of genomes in the cytoplasm. NS5 methylates viral RNA cap at guanine N-7 and ribose 2'-O positions. Besides its role in RNA genome replication, also prevents the establishment of cellular antiviral state by blocking the interferon-alpha/beta (IFN-alpha/beta) signaling pathway. Inhibits host TYK2 and STAT2 phosphorylation, thereby preventing activation of JAK-STAT signaling pathway. This is Genome polyprotein from Dengue virus type 3 (strain Philippines/H87/1956) (DENV-3).